The primary structure comprises 170 residues: Double homeobox protein 1 (170 aa).

2 DNA-binding regions (homeobox) span residues 19-78 (GRRM…LRQH) and 94-153 (GRRK…RGQS). The tract at residues 75-100 (LRQHRRQSRPWPGRRDPQKGRRKRTA) is disordered.

It belongs to the paired homeobox family. In terms of tissue distribution, expressed in rhabdomyosarcoma TE671 cells as well as in several other normal and cancer cells.

It localises to the nucleus. Functionally, probable transcription activator. Binds the P5 DNA element sequence 5'-GATCTGAGTCTAATTGAGAATTACTGTAC-3'. This Homo sapiens (Human) protein is Double homeobox protein 1 (DUX1).